A 172-amino-acid polypeptide reads, in one-letter code: Large ribosomal subunit protein uL10 (172 aa).

This sequence belongs to the universal ribosomal protein uL10 family. Part of the ribosomal stalk of the 50S ribosomal subunit. The N-terminus interacts with L11 and the large rRNA to form the base of the stalk. The C-terminus forms an elongated spine to which L12 dimers bind in a sequential fashion forming a multimeric L10(L12)X complex.

Functionally, forms part of the ribosomal stalk, playing a central role in the interaction of the ribosome with GTP-bound translation factors. The chain is Large ribosomal subunit protein uL10 from Bartonella bacilliformis (strain ATCC 35685 / KC583 / Herrer 020/F12,63).